The primary structure comprises 227 residues: Testis expressed protein 56 (227 aa).

Expressed predominantly in the testis.

The chain is Testis expressed protein 56 from Mus musculus (Mouse).